A 283-amino-acid polypeptide reads, in one-letter code: Polyamine aminopropyltransferase (283 aa).

In terms of domain architecture, PABS spans 5-238 (QTWIDEYHKG…GIWSWTFASS (234 aa)). S-methyl-5'-thioadenosine is bound at residue Gln-32. Positions 63 and 87 each coordinate spermidine. S-methyl-5'-thioadenosine is bound by residues Glu-107 and 139-140 (DG). The active-site Proton acceptor is Asp-158. 158 to 161 (DCSD) is a binding site for spermidine.

The protein belongs to the spermidine/spermine synthase family. As to quaternary structure, homodimer or homotetramer.

It is found in the cytoplasm. It catalyses the reaction S-adenosyl 3-(methylsulfanyl)propylamine + putrescine = S-methyl-5'-thioadenosine + spermidine + H(+). Its pathway is amine and polyamine biosynthesis; spermidine biosynthesis; spermidine from putrescine: step 1/1. In terms of biological role, catalyzes the irreversible transfer of a propylamine group from the amino donor S-adenosylmethioninamine (decarboxy-AdoMet) to putrescine (1,4-diaminobutane) to yield spermidine. The protein is Polyamine aminopropyltransferase of Prochlorococcus marinus (strain MIT 9301).